Reading from the N-terminus, the 223-residue chain is MDRKIVQLIHNFSGTEKLKAAVFSHDEQCFFDFVSFDELNSKLTGFLLFDSLEKLFKLVETIQQKRSWLYVDELWLINTATENQQLNEVSVWLVKKELAQVGVLTQLDTSLVKLLMASKNTDSALYNTYIKPVELQQFTQTPAPDNVNAEQSHLTLESTTDLNNSQLANTPALWEVEQTTQELLPTMDFSKFIDELDQITKNFSDLELEPLSFNEGFDEWNQE.

This is an uncharacterized protein from Mycoplasma pneumoniae (strain ATCC 29342 / M129 / Subtype 1) (Mycoplasmoides pneumoniae).